A 204-amino-acid chain; its full sequence is High frequency lysogenization protein HflD homolog (204 aa).

This sequence belongs to the HflD family.

The protein resides in the cytoplasm. It is found in the cell inner membrane. This Actinobacillus succinogenes (strain ATCC 55618 / DSM 22257 / CCUG 43843 / 130Z) protein is High frequency lysogenization protein HflD homolog.